The sequence spans 433 residues: B3 domain-containing protein Os04g0676600 (433 aa).

2 disordered regions span residues 1-29 (MADT…GGGQ) and 216-283 (FPPV…NSAN). Residues 13–24 (GDDRGREGHDDF) are compositionally biased toward basic and acidic residues. The span at 216–229 (FPPVSSSSRSFSSA) shows a compositional bias: low complexity. Residues 237-265 (DAKKAKKSDIKDQPIVLRRSDTESEKNDE) are compositionally biased toward basic and acidic residues. Residues 269–283 (TPASEPSSMSHNSAN) are compositionally biased toward polar residues. Residues 297–399 (LRKELTNSDV…KLVVRGEKAI (103 aa)) constitute a DNA-binding region (TF-B3).

The protein localises to the nucleus. Functionally, probable transcription regulator that binds specifically to the DNA sequence 5'-CATGC-3' of the IDE1 element found in the promoter of the barley iron deficiency-inducible gene IDS2. This is B3 domain-containing protein Os04g0676600 from Oryza sativa subsp. japonica (Rice).